The sequence spans 927 residues: 2-oxoadipate dehydrogenase complex component E1 (927 aa).

The protein belongs to the alpha-ketoglutarate dehydrogenase family. In terms of assembly, the 2-oxoadipate dehydrogenase complex is composed of OADH (2-oxoadipate dehydrogenase; E1a), DLST (dihydrolipoamide succinyltransferase; E2) and DLD (dihydrolipoamide dehydrogenase; E3). E1a functional unit is a dimer. Requires thiamine diphosphate as cofactor.

It is found in the mitochondrion. The enzyme catalyses N(6)-[(R)-lipoyl]-L-lysyl-[protein] + 2-oxoadipate + H(+) = N(6)-[(R)-S(8)-glutaryldihydrolipoyl]-L-lysyl-[protein] + CO2. Its pathway is amino-acid degradation. Its function is as follows. 2-oxoadipate dehydrogenase (E1a) component of the 2-oxoadipate dehydrogenase complex (OADHC). Participates in the first step, rate limiting for the overall conversion of 2-oxoadipate (alpha-ketoadipate) to glutaryl-CoA and CO(2) catalyzed by the whole OADHC. Catalyzes the irreversible decarboxylation of 2-oxoadipate via the thiamine diphosphate (ThDP) cofactor and subsequent transfer of the decarboxylated acyl intermediate on an oxidized dihydrolipoyl group that is covalently amidated to the E2 enzyme (dihydrolipoyllysine-residue succinyltransferase or DLST). Can catalyze the decarboxylation of 2-oxoglutarate in vitro, but at a much lower rate than 2-oxoadipate. Responsible for the last step of L-lysine, L-hydroxylysine and L-tryptophan catabolism with the common product being 2-oxoadipate. The chain is 2-oxoadipate dehydrogenase complex component E1 (dhtkd1) from Xenopus laevis (African clawed frog).